Consider the following 37-residue polypeptide: Translationally-controlled tumor protein homolog (37 aa).

Residues 1–37 (MKIFRDILTNAEVVXDNDKPMDVLDEIVYAXQGRYIE) enclose the TCTP domain.

It belongs to the TCTP family. Monomer.

Its subcellular location is the cytoplasm. Functionally, binds calcium; exact function not known. The chain is Translationally-controlled tumor protein homolog from Trypanosoma brucei brucei.